Here is a 327-residue protein sequence, read N- to C-terminus: MQREKIVVIGAGAFGTALAVVIALENRHDVTLLGRDPSLMADLRNERVHEAALPGVELPDALGFSAEPDVLAGASIVLFAMPSQAHADAAQHYGPYLASDSIIVTCAKGIDRNSGRLLTELLETELPHHPIAVLSGPGFAADIARGLPTAMAIAAEDATVAERLATTISGKTFRLYASTDRIGVQLGGALKNVLAIAAGIVEGAGLGDSARAALISRGLAEMSRLIVAMGGKADTVRGLSGLGDLVLTATSHQSRNLRFGIALGRGEGKDMSGGLVEGAFAAAVAARLGEHHAIDMPVTEAVAAIIDGNLDVASAMQQLMTRPITTE.

Positions 14, 35, and 108 each coordinate NADPH. Positions 108 and 136 each coordinate sn-glycerol 3-phosphate. Ala140 is a binding site for NADPH. Positions 191, 244, 254, 255, and 256 each coordinate sn-glycerol 3-phosphate. Residue Lys191 is the Proton acceptor of the active site. Arg255 is a binding site for NADPH. Residues Leu275 and Glu277 each contribute to the NADPH site.

The protein belongs to the NAD-dependent glycerol-3-phosphate dehydrogenase family.

It is found in the cytoplasm. It catalyses the reaction sn-glycerol 3-phosphate + NAD(+) = dihydroxyacetone phosphate + NADH + H(+). The enzyme catalyses sn-glycerol 3-phosphate + NADP(+) = dihydroxyacetone phosphate + NADPH + H(+). It participates in membrane lipid metabolism; glycerophospholipid metabolism. Its function is as follows. Catalyzes the reduction of the glycolytic intermediate dihydroxyacetone phosphate (DHAP) to sn-glycerol 3-phosphate (G3P), the key precursor for phospholipid synthesis. The protein is Glycerol-3-phosphate dehydrogenase [NAD(P)+] of Agrobacterium fabrum (strain C58 / ATCC 33970) (Agrobacterium tumefaciens (strain C58)).